The following is a 304-amino-acid chain: Voltage-dependent anion channel-forming protein YneE (304 aa).

Helical transmembrane passes span 28–48 (LLLN…YTHL), 50–70 (IKFT…FLGF), 194–214 (VLAG…TLIL), and 220–240 (LFCI…TPFI).

This sequence belongs to the anion channel-forming bestrophin (TC 1.A.46) family.

The protein localises to the cell membrane. The chain is Voltage-dependent anion channel-forming protein YneE (yneE) from Escherichia coli O157:H7.